The following is a 160-amino-acid chain: Keratin-associated protein 13-4 (160 aa).

Repeat copies occupy residues 41–50, 51–60, 61–70, and 77–86. Positions 41–86 are 4 X 10 AA approximate repeats; it reads CQLGSSLYRDCQKTCWEPASCQKSCYHPRTSMLCCPCQTTCSGSLG.

This sequence belongs to the PMG family. In terms of assembly, interacts with hair keratins.

Functionally, in the hair cortex, hair keratin intermediate filaments are embedded in an interfilamentous matrix, consisting of hair keratin-associated proteins (KRTAP), which are essential for the formation of a rigid and resistant hair shaft through their extensive disulfide bond cross-linking with abundant cysteine residues of hair keratins. The matrix proteins include the high-sulfur and high-glycine-tyrosine keratins. The chain is Keratin-associated protein 13-4 (KRTAP13-4) from Hylobates agilis (Agile gibbon).